We begin with the raw amino-acid sequence, 232 residues long: Sec-independent protein translocase protein TatB (232 aa).

Residues 1-21 traverse the membrane as a helical segment; sequence MFDIGFGELMLLFVIGLVVLG. Disordered stretches follow at residues 108–129 and 176–232; these read EPHTIHNPLVTDPEALHDGVTP and AAST…NNDR. Composition is skewed to low complexity over residues 189–203 and 214–232; these read ADSAANLATQAATPA and RAATATGPASSTSPLNNDR.

It belongs to the TatB family. The Tat system comprises two distinct complexes: a TatABC complex, containing multiple copies of TatA, TatB and TatC subunits, and a separate TatA complex, containing only TatA subunits. Substrates initially bind to the TatABC complex, which probably triggers association of the separate TatA complex to form the active translocon.

It localises to the cell inner membrane. Functionally, part of the twin-arginine translocation (Tat) system that transports large folded proteins containing a characteristic twin-arginine motif in their signal peptide across membranes. Together with TatC, TatB is part of a receptor directly interacting with Tat signal peptides. TatB may form an oligomeric binding site that transiently accommodates folded Tat precursor proteins before their translocation. The sequence is that of Sec-independent protein translocase protein TatB from Sodalis glossinidius (strain morsitans).